The following is a 469-amino-acid chain: Glutamine synthetase (469 aa).

The GS beta-grasp domain maps to 13–97; that stretch reads HEVKFVDLRF…IRCDILEPGT (85 aa). Residues 105 to 469 form the GS catalytic domain; sequence PRSIAKRAED…PVEFELYYSV (365 aa). Positions 130 and 132 each coordinate Mg(2+). Residue Glu-208 coordinates ATP. Positions 213 and 221 each coordinate Mg(2+). Residues 265–266 and Gly-266 each bind L-glutamate; that span reads NG. His-270 contacts Mg(2+). ATP is bound by residues 272–274 and Ser-274; that span reads HMS. L-glutamate contacts are provided by Arg-322, Glu-328, and Arg-340. Arg-340, Arg-345, and Lys-353 together coordinate ATP. Mg(2+) is bound at residue Glu-358. Arg-360 provides a ligand contact to L-glutamate. At Tyr-398 the chain carries O-AMP-tyrosine.

Belongs to the glutamine synthetase family. As to quaternary structure, oligomer of 12 subunits arranged in the form of two hexameric ring. It depends on Mg(2+) as a cofactor.

Its subcellular location is the cytoplasm. The catalysed reaction is L-glutamate + NH4(+) + ATP = L-glutamine + ADP + phosphate + H(+). Its activity is regulated as follows. The activity of this enzyme could be controlled by adenylation under conditions of abundant glutamine. Its function is as follows. Catalyzes the ATP-dependent biosynthesis of glutamine from glutamate and ammonia. In Escherichia coli O157:H7, this protein is Glutamine synthetase.